The following is a 101-amino-acid chain: Large ribosomal subunit protein uL6m (101 aa).

It belongs to the universal ribosomal protein uL6 family.

The protein localises to the mitochondrion. This Marchantia polymorpha (Common liverwort) protein is Large ribosomal subunit protein uL6m (RPL6).